The sequence spans 99 residues: Plastocyanin (99 aa).

A Plastocyanin-like domain is found at 1 to 99 (LDVLLGSDDG…AGMVGKVTVN (99 aa)). The Cu cation site is built by His37, Cys84, His87, and Met92.

The protein belongs to the plastocyanin family. It depends on Cu(2+) as a cofactor.

It is found in the plastid. It localises to the chloroplast thylakoid membrane. Participates in electron transfer between P700 and the cytochrome b6-f complex in photosystem I. The polypeptide is Plastocyanin (PETE) (Mercurialis perennis (Dog's mercury)).